The sequence spans 406 residues: Tyrosine-specific transport system 2 (406 aa).

11 consecutive transmembrane segments (helical) span residues phenylalanine 7–leucine 27, leucine 38–valine 58, isoleucine 83–glycine 103, alanine 119–valine 139, valine 150–valine 170, alanine 183–alanine 203, alanine 219–histidine 239, valine 279–glycine 299, phenylalanine 314–glycine 334, phenylalanine 335–isoleucine 355, and asparagine 376–isoleucine 396.

Belongs to the amino acid/polyamine transporter 2 family. Mtr/TnaB/TyrP permease subfamily.

The protein resides in the cell inner membrane. It catalyses the reaction L-tyrosine(in) + H(+)(in) = L-tyrosine(out) + H(+)(out). Transports tyrosine across the cytoplasmic membrane. The transport system is energized by the proton motive force. The protein is Tyrosine-specific transport system 2 (tyrP-B) of Haemophilus influenzae (strain ATCC 51907 / DSM 11121 / KW20 / Rd).